The chain runs to 721 residues: Polyribonucleotide nucleotidyltransferase (721 aa).

Mg(2+)-binding residues include Asp495 and Asp501. Positions 562 to 621 (PRITTIKIRPERIKDIIGPGGKTIKDITARTGTSINIEDDGSVSIASPNQDKVEEAIKMI) constitute a KH domain. The region spanning 631–699 (GRIYMGTVRK…RSGKIRLSRK (69 aa)) is the S1 motif domain. The tract at residues 699–721 (KEALADSAKKSEGTEPPKGEPAK) is disordered.

The protein belongs to the polyribonucleotide nucleotidyltransferase family. The cofactor is Mg(2+).

It is found in the cytoplasm. The catalysed reaction is RNA(n+1) + phosphate = RNA(n) + a ribonucleoside 5'-diphosphate. In terms of biological role, involved in mRNA degradation. Catalyzes the phosphorolysis of single-stranded polyribonucleotides processively in the 3'- to 5'-direction. This is Polyribonucleotide nucleotidyltransferase from Anaeromyxobacter dehalogenans (strain 2CP-C).